The chain runs to 806 residues: Disintegrin and metalloproteinase domain-containing protein 1b (806 aa).

The N-terminal stretch at 1–33 (MERLKLGKIPEHWCIRLVAMLLLAIIFLPSTFC) is a signal peptide. The tract at residues 169-188 (CSVTPKDSPGDTSHPPRSRK) is disordered. Positions 203-397 (KYVEMFVVVN…HRGVCLLDEP (195 aa)) constitute a Peptidase M12B domain. The N-linked (GlcNAc...) asparagine glycan is linked to Asn-224. 7 cysteine pairs are disulfide-bonded: Cys-313–Cys-392, Cys-353–Cys-376, Cys-355–Cys-361, Cys-462–Cys-482, Cys-635–Cys-647, Cys-641–Cys-653, and Cys-655–Cys-664. His-338 is a Zn(2+) binding site. Residue Glu-339 is part of the active site. Zn(2+) is bound by residues His-342 and His-348. N-linked (GlcNAc...) asparagine glycans are attached at residues Asn-375 and Asn-476. Residues 406-490 (AANCGNGVVE…ACPSDRKAQD (85 aa)) form the Disintegrin domain. Positions 631–665 (FSFPCSPSKQCNKHGVCNDLGNCHCSFGFAPPDCK) constitute an EGF-like domain. The disordered stretch occupies residues 668 to 694 (GTGGSVDSGPAVNLSNDSSPGPNSTQS). Residues Asn-680, Asn-683, and Asn-690 are each glycosylated (N-linked (GlcNAc...) asparagine). Residues 680–694 (NLSNDSSPGPNSTQS) show a composition bias toward polar residues. A helical transmembrane segment spans residues 705 to 725 (LIVLAVILVLMILLIIICIIS). Residues 726-806 (AYTKSETASE…KDEDEEEGEE (81 aa)) lie on the Cytoplasmic side of the membrane. The interval 735-806 (EAGPSELEEL…KDEDEEEGEE (72 aa)) is disordered. The segment covering 740-806 (ELEELPEGEK…KDEDEEEGEE (67 aa)) has biased composition (acidic residues).

Heterodimer with ADAM2/fertilin subunit beta. In terms of tissue distribution, testis.

The protein resides in the membrane. In terms of biological role, may play a role in spermatogenesis and sperm maturation. The chain is Disintegrin and metalloproteinase domain-containing protein 1b (Adam1b) from Mus musculus (Mouse).